A 312-amino-acid polypeptide reads, in one-letter code: tRNA dimethylallyltransferase (312 aa).

13–20 (GPTAVGKT) is an ATP binding site. 15-20 (TAVGKT) is a binding site for substrate. Interaction with substrate tRNA regions lie at residues 38-41 (DSVQ) and 163-167 (QRVVR).

This sequence belongs to the IPP transferase family. In terms of assembly, monomer. Mg(2+) is required as a cofactor.

It carries out the reaction adenosine(37) in tRNA + dimethylallyl diphosphate = N(6)-dimethylallyladenosine(37) in tRNA + diphosphate. Functionally, catalyzes the transfer of a dimethylallyl group onto the adenine at position 37 in tRNAs that read codons beginning with uridine, leading to the formation of N6-(dimethylallyl)adenosine (i(6)A). The sequence is that of tRNA dimethylallyltransferase from Exiguobacterium sibiricum (strain DSM 17290 / CCUG 55495 / CIP 109462 / JCM 13490 / 255-15).